The chain runs to 283 residues: Urease accessory protein UreD 1 (283 aa).

This sequence belongs to the UreD family. As to quaternary structure, ureD, UreF and UreG form a complex that acts as a GTP-hydrolysis-dependent molecular chaperone, activating the urease apoprotein by helping to assemble the nickel containing metallocenter of UreC. The UreE protein probably delivers the nickel.

The protein localises to the cytoplasm. In terms of biological role, required for maturation of urease via the functional incorporation of the urease nickel metallocenter. The protein is Urease accessory protein UreD 1 of Brucella anthropi (strain ATCC 49188 / DSM 6882 / CCUG 24695 / JCM 21032 / LMG 3331 / NBRC 15819 / NCTC 12168 / Alc 37) (Ochrobactrum anthropi).